A 508-amino-acid chain; its full sequence is N-acetyl-D-hexosamine oxidase (508 aa).

One can recognise an FAD-binding PCMH-type domain in the interval 26–203; that stretch reads TDAQAAGRIA…TAYTFARLPE (178 aa). Positions 64–123 form a cross-link, 6-(S-cysteinyl)-8alpha-(pros-histidyl)-FAD (His-Cys); the sequence is HCYEDFVSNNPDGAIVDLSLLNAPEVRADGTVRIPAGTQNWNGYLELYKRHNLTLPGGSC.

Belongs to the oxygen-dependent FAD-linked oxidoreductase family. Requires FAD as cofactor.

The catalysed reaction is N-acetyl-D-glucosamine + O2 + H2O = N-acetyl-D-glucosaminate + H2O2 + H(+). The enzyme catalyses N-acetyl-D-galactosamine + O2 + H2O = N-acetyl-D-galactosaminate + H2O2 + H(+). It catalyses the reaction N-acetyl-D-glucosamine + O2 = N-acetyl-D-glucosamino-1,5-lactone + H2O2. It carries out the reaction N-acetyl-D-galactosamine + O2 = N-acetyl-D-galactosamino-1,5-lactone + H2O2. Its function is as follows. Catalyzes the oxidation of a range of monosaccharides in vitro, displaying the highest activity with N-acetylglucosamine (GlcNAc) and N-acetylgalactosamine (GalNAc), with a reduction of O2 to H2O2. Acts upon the C1 carbon of the GlcNAc or GalNAc molecule, producing the corresponding lactone, which can spontaneously hydrolyze. Its biological function is unclear, but its main function might be connected to extracellular production of hydrogen peroxide to compete with other organisms through oxidative stress, or support the action of peroxidases and peroxygenases. This is N-acetyl-D-hexosamine oxidase from Ralstonia solanacearum (strain UW551).